We begin with the raw amino-acid sequence, 463 residues long: Dihydrolipoyllysine-residue succinyltransferase component of 2-oxoglutarate dehydrogenase complex, mitochondrial (463 aa).

One can recognise a Lipoyl-binding domain in the interval serine 73 to glutamate 148. Position 114 is an N6-lipoyllysine (lysine 114). The segment at leucine 144–arginine 237 is disordered. The span at glutamate 148–serine 157 shows a compositional bias: low complexity. Basic and acidic residues predominate over residues threonine 184–lysine 212. A run of 3 repeats spans residues alanine 185–alanine 190, alanine 191–alanine 196, and alanine 197–valine 202. Residues alanine 185–aspartate 209 are 4 X 6 AA approximate tandem repeats of A-[SP]-K-K-E-[AV]. One copy of the 4; approximate repeat lies at glutamate 204 to aspartate 209. Threonine 340 carries the post-translational modification Phosphothreonine. Residues histidine 435 and aspartate 439 contribute to the active site.

Belongs to the 2-oxoacid dehydrogenase family. As to quaternary structure, component of the 2-oxoglutarate dehydrogenase complex (OGDC), also called alpha-ketoglutarate dehydrogenase (KGDH) complex. The copmplex is composed of the catalytic subunits OGDH (2-oxoglutarate dehydrogenase KGD1; also called E1 subunit), DLST (dihydrolipoamide succinyltransferase KGD2; also called E2 subunit) and DLD (dihydrolipoamide dehydrogenase LPD1; also called E3 subunit), and the assembly factor KGD4. (R)-lipoate serves as cofactor.

Its subcellular location is the mitochondrion. It catalyses the reaction N(6)-[(R)-dihydrolipoyl]-L-lysyl-[protein] + succinyl-CoA = N(6)-[(R)-S(8)-succinyldihydrolipoyl]-L-lysyl-[protein] + CoA. It functions in the pathway amino-acid degradation; L-lysine degradation via saccharopine pathway; glutaryl-CoA from L-lysine: step 6/6. The 2-oxoglutarate dehydrogenase complex catalyzes the overall conversion of 2-oxoglutarate to succinyl-CoA and CO(2). It contains multiple copies of three enzymatic components: 2-oxoglutarate dehydrogenase (E1), dihydrolipoamide succinyltransferase (E2) and lipoamide dehydrogenase (E3). The protein is Dihydrolipoyllysine-residue succinyltransferase component of 2-oxoglutarate dehydrogenase complex, mitochondrial (KGD2) of Saccharomyces cerevisiae (strain ATCC 204508 / S288c) (Baker's yeast).